Here is a 142-residue protein sequence, read N- to C-terminus: Coactosin-like protein (142 aa).

Ala-2 carries the post-translational modification N-acetylalanine. The ADF-H domain occupies 2-130; sequence ATKIDKEACR…EEDFIKNELK (129 aa). A flexible and important for F-actin binding region spans residues 66–75; sequence TGDAMSKRSK. Residues Lys-102 and Lys-126 each carry the N6-acetyllysine modification.

It belongs to the actin-binding proteins ADF family. Coactosin subfamily. As to quaternary structure, interacts with 5-lipoxygenase (ALOX5/5LO) in a calcium-independent manner. Binds to F-actin with a stoichiometry of 1:2.

It localises to the cytoplasm. The protein resides in the cytoskeleton. The protein localises to the nucleus. Its function is as follows. Binds to F-actin in a calcium-independent manner. Has no direct effect on actin depolymerization. Acts as a chaperone for ALOX5 (5LO), influencing both its stability and activity in leukotrienes synthesis. The sequence is that of Coactosin-like protein (COTL1) from Bos taurus (Bovine).